The primary structure comprises 541 residues: Developmental and secondary metabolism regulator VEL1 (541 aa).

A Velvet domain is found at 26–220 (NRHLWYQLTV…ADQGCRVRIR (195 aa)). The short motif at 40 to 45 (ERARAC) is the Nuclear localization signal element. Disordered regions lie at residues 222-447 (DVRM…MPTQ) and 464-483 (PIEA…TGGK). Basic and acidic residues predominate over residues 230–244 (GKGSGYDRREEEYAR). The segment covering 289-298 (APSLPHAPSL) has biased composition (low complexity). 3 stretches are compositionally biased toward pro residues: residues 299–314 (PHAP…PPAA), 345–355 (APIPPVTPTGP), and 425–439 (SPAP…PAPS). Positions 444-472 (MPTQSSLAPLKIASLVSPLPPIEAQTEPL) are PEST.

The protein belongs to the velvet family. VeA subfamily. As to quaternary structure, component of the heterotrimeric velvet complex composed of LAE1, VEL1 and VEL2; VEL1 acting as a bridging protein between LAE1 and VEL2.

It localises to the nucleus. The protein resides in the cytoplasm. Component of the velvet transcription factor complex that controls sexual/asexual developmental ratio in response to light, promoting sexual development in the darkness while stimulating asexual sporulation under illumination. The velvet complex acts as a global regulator for secondary metabolite gene expression. Controls the expression of the gliotoxin gene cluster. Plays a key role in mycoparasitism. The polypeptide is Developmental and secondary metabolism regulator VEL1 (Hypocrea virens (strain Gv29-8 / FGSC 10586) (Gliocladium virens)).